A 387-amino-acid polypeptide reads, in one-letter code: Phosphoglycerate kinase (387 aa).

Substrate contacts are provided by residues aspartate 21 to asparagine 23, arginine 36, histidine 59 to arginine 62, arginine 113, and arginine 146. ATP contacts are provided by residues lysine 197, glutamate 314, and glycine 340 to threonine 343.

Belongs to the phosphoglycerate kinase family. In terms of assembly, monomer.

The protein localises to the cytoplasm. The enzyme catalyses (2R)-3-phosphoglycerate + ATP = (2R)-3-phospho-glyceroyl phosphate + ADP. It functions in the pathway carbohydrate degradation; glycolysis; pyruvate from D-glyceraldehyde 3-phosphate: step 2/5. The sequence is that of Phosphoglycerate kinase (pgk) from Vibrio cholerae serotype O1 (strain ATCC 39541 / Classical Ogawa 395 / O395).